A 582-amino-acid polypeptide reads, in one-letter code: Potassium-transporting ATPase potassium-binding subunit (582 aa).

A run of 10 helical transmembrane segments spans residues 11 to 31 (AVFF…LAWV), 81 to 101 (LKAV…VLMF), 148 to 168 (FGIG…MPAF), 195 to 215 (LLPI…VQTI), 272 to 292 (VLTL…GAWV), 298 to 318 (GVAI…VAVV), 379 to 399 (ALGA…NGVG), 401 to 421 (GLLN…LMIG), 439 to 459 (VFVV…AAVV), and 551 to 571 (GLLI…ALVF).

Belongs to the KdpA family. As to quaternary structure, the system is composed of three essential subunits: KdpA, KdpB and KdpC.

The protein localises to the cell membrane. Functionally, part of the high-affinity ATP-driven potassium transport (or Kdp) system, which catalyzes the hydrolysis of ATP coupled with the electrogenic transport of potassium into the cytoplasm. This subunit binds the extracellular potassium ions and delivers the ions to the membrane domain of KdpB through an intramembrane tunnel. The sequence is that of Potassium-transporting ATPase potassium-binding subunit from Halobacterium salinarum (strain ATCC 700922 / JCM 11081 / NRC-1) (Halobacterium halobium).